We begin with the raw amino-acid sequence, 846 residues long: MKLLSFKKKPSLTKSQSCPDKLKNLKEQQKDPKNGANYDTATIKSYTLQQHQQQQQQQREDNNMINNENEDFSFNYFDYDEDQESTYSREERLFFSIWRNNKIKRCIFHHLEIFNLMNNINDPITLDQLNLIDSGKLRDYCKIVKIEKNEKIELQCMPIPNHIEKLIFSNEFDKPIKAGTIPQSVVEIEFGEKFNQVLKQGQLPPSLEILKFGKRFNQMVTHSTGELPTSLTTLIFGNNFDQIILKNFIPPNVSTLIFGLNFDQPLSPGYIPSSVTKLEFQENFNQPLTIGTIPKNVKHLKIFSKFPLNQGAIPQSCTTLYYGGDCNQGTKNIPDSVKSLHFLQSIDCNNLTKERSLSKSSSSISLDISGGGSGSGSGVNSTTTSEKITFLQPESICKSVTNLTIELNQGPPNKKYLPMNSVTQLSLGINEFKKPLKSSYIPNCCTSLLLNIGPDYKFQQLLSKSIPSSVTALQFGPNFNLTIMPNSLPIHLRSIDFGDGFNQQLLQNSLPTLIDSIKFGNSYNQPISNNVLSNSNYLTSIEFGKSFDQPLIIGNGIGNLNNNNINNNVTNSNLPITLNKLKFSKDSNFKSLLKIESDSMIEEIEFGDQYNEEFNNQCSLGCTHLLSIKFGENFNQPINNLPISIKKLIFGNSFNQSIKNLPENLTSLSLGTSFSQNLINLPNSLIELKMFNKDFLNNLNFSNNNNENNNENNNENNNENNNENNNENNNNTNSFNDFIKNTTIKRIKVPCLITTLNFIVEKNKSKNCSLLKFYCFVVANNNYTNLVKYNLLLNKSYFEKWSKKKEGQSPRKQRKKKIPTDQRSTKLLLVRKFLYQVFFFFFFFFF.

The segment covering 1–11 (MKLLSFKKKPS) has biased composition (basic residues). The disordered stretch occupies residues 1–39 (MKLLSFKKKPSLTKSQSCPDKLKNLKEQQKDPKNGANYD). Residues 20 to 33 (DKLKNLKEQQKDPK) show a composition bias toward basic and acidic residues. 4 FNIP repeats span residues 159–193 (IPNHIEKLIFSNEFDKPIKAGTIPQSVVEIEFGEK), 194–239 (FNQV…FGNN), 240–283 (FDQI…FQEN), and 284–325 (FNQP…YGGD). Residues 362-384 (SSISLDISGGGSGSGSGVNSTTT) form a disordered region. 3 FNIP repeats span residues 458–500 (FQQL…FGDG), 501–546 (FNQQ…FGKS), and 654–693 (FNQSIKNLPENLTSLSLGTSFSQNLINLPNSLIELKMFNK). The disordered stretch occupies residues 702–734 (SNNNNENNNENNNENNNENNNENNNENNNNTNS). Residues 702 to 734 (SNNNNENNNENNNENNNENNNENNNENNNNTNS) are a coiled coil.

The protein is FNIP repeat-containing protein DDB_G0289381 of Dictyostelium discoideum (Social amoeba).